The sequence spans 554 residues: (S)-1-hydroxy-N-methylcanadine 13-hydroxylase CYP82X2 (554 aa).

Residues 23-43 traverse the membrane as a helical segment; the sequence is IISTFIVTIISIVFLYTVLLI. Position 494 (Cys494) interacts with heme.

The protein belongs to the cytochrome P450 family. Heme is required as a cofactor. As to expression, highly expressed in capsules. Expressed is stems.

It localises to the membrane. The enzyme catalyses (S)-1-hydroxy-N-methylcanadine + reduced [NADPH--hemoprotein reductase] + O2 = (13S,14R)-1,13-dihydroxy-N-methylcanadine + oxidized [NADPH--hemoprotein reductase] + H2O + H(+). It participates in alkaloid biosynthesis. In terms of biological role, cytochrome P450 involved in the biosynthesis of the benzylisoquinoline alkaloid noscapine. Converts (S)-1-hydroxy-N-methylcanadine to (13S,14R)-1,13-dihydroxy-N-methylcanadine. The chain is (S)-1-hydroxy-N-methylcanadine 13-hydroxylase CYP82X2 from Papaver somniferum (Opium poppy).